The primary structure comprises 213 residues: 3,4-dihydroxy-2-butanone 4-phosphate synthase (213 aa).

Residues 37 to 38 (RE), Asp-42, 150 to 154 (RAGHT), and Glu-174 contribute to the D-ribulose 5-phosphate site. Glu-38 lines the Mg(2+) pocket. His-153 serves as a coordination point for Mg(2+).

Belongs to the DHBP synthase family. As to quaternary structure, homodimer. Mg(2+) serves as cofactor. Mn(2+) is required as a cofactor.

It carries out the reaction D-ribulose 5-phosphate = (2S)-2-hydroxy-3-oxobutyl phosphate + formate + H(+). It participates in cofactor biosynthesis; riboflavin biosynthesis; 2-hydroxy-3-oxobutyl phosphate from D-ribulose 5-phosphate: step 1/1. In terms of biological role, catalyzes the conversion of D-ribulose 5-phosphate to formate and 3,4-dihydroxy-2-butanone 4-phosphate. The polypeptide is 3,4-dihydroxy-2-butanone 4-phosphate synthase (Buchnera aphidicola subsp. Schizaphis graminum (strain Sg)).